Consider the following 598-residue polypeptide: Protein VASCULAR ASSOCIATED DEATH 1, chloroplastic (598 aa).

Polar residues predominate over residues 1–11 (MAMLSTASVSG). The interval 1 to 64 (MAMLSTASVS…PSRGGDNQSE (64 aa)) is disordered. A chloroplast-targeting transit peptide spans 1 to 68 (MAMLSTASVS…GDNQSEVISK (68 aa)). An N-linked (GlcNAc...) asparagine glycan is attached at Asn61. One can recognise a GRAM domain in the interval 70 to 134 (EEYRQLFRLP…PFAEISCVKR (65 aa)). In terms of domain architecture, VASt spans 272 to 444 (DFTKVAEAKF…MAHELLKQKK (173 aa)). 2 N-linked (GlcNAc...) asparagine glycosylation sites follow: Asn329 and Asn494. Residues 507-527 (QVIVLAFAVILLMQVTIVVLL) form a helical membrane-spanning segment. A coiled-coil region spans residues 553 to 595 (WLEKRMHFLREEMMMVEDRLQRMRQDHAALKAQFHHLERLLRR).

It localises to the membrane. It is found in the plastid. Its subcellular location is the chloroplast. Involved in ethylene- and salicylic acid-dependent cell death control associated with cells in the vicinity of vascular bundles. The protein is Protein VASCULAR ASSOCIATED DEATH 1, chloroplastic of Arabidopsis thaliana (Mouse-ear cress).